A 584-amino-acid chain; its full sequence is ETHYLENE INSENSITIVE 3-like 1 protein (584 aa).

A coiled-coil region spans residues 41-74; the sequence is YTDDEMDVDELEKRMWRDKMRLKRLKEQQSKCKE. Positions 67–80 are enriched in basic and acidic residues; the sequence is EQQSKCKEGVDGSK. Disordered stretches follow at residues 67 to 93 and 565 to 584; these read EQQS…RKKM and EGMG…SIWF.

It belongs to the EIN3 family. Acts as a homodimer to bind the primary ethylene response element.

The protein localises to the nucleus. In terms of biological role, probable transcription factor acting as a positive regulator in the ethylene response pathway. Could bind the primary ethylene response element present in the ETHYLENE-RESPONSE-FACTOR1 promoter. This Arabidopsis thaliana (Mouse-ear cress) protein is ETHYLENE INSENSITIVE 3-like 1 protein (EIL1).